A 743-amino-acid polypeptide reads, in one-letter code: Peptide transporter family 1 (743 aa).

The segment at 1–28 (MASEITNGKNGQNGKNGQKEESDSQIAP) is disordered. Residues 7-16 (NGKNGQNGKN) are compositionally biased toward low complexity. Helical transmembrane passes span 74 to 94 (VLFHTFTMLVYIFPLIGALIA), 104 to 124 (ILYLSLVYSLGAMVVSFGAVP), 132 to 152 (AVTVVGLLLIAIGTGGIKPCV), 173 to 193 (FSLFYFAINAGSLISTTFTPI), 207 to 227 (FSLAFGVPAILMIFSVIIFMA), 334 to 354 (VVNPLLILGFLPLFDYIIYPA), 364 to 384 (LQKLTLGLLLAALGFFLSAGL), 597 to 619 (LPQIVVMTAAEVMFSVTGLEFSY), 629 to 649 (VLQACWLLSVAIGNMLVVVIA), and 659 to 679 (GEFTLFASLMLVDMMIFLWLA).

The protein belongs to the major facilitator superfamily. Proton-dependent oligopeptide transporter (POT/PTR) (TC 2.A.17) family. As to expression, expressed in thorax and abdomen of females: apical epithelial membranes of midgut, rectum, and reproductive tract. Also expressed in neuropil of the central nervous system, with elevated expression within the alpha- and beta-lobes of the mushroom bodies.

The protein localises to the membrane. Functionally, important role in absorption of dietary peptides. High-affinity transporter of alanylalanine. Dipeptide transport activity is proton dependent. In Drosophila melanogaster (Fruit fly), this protein is Peptide transporter family 1 (yin).